Here is a 295-residue protein sequence, read N- to C-terminus: 4-hydroxy-tetrahydrodipicolinate synthase (295 aa).

Thr-46 is a pyruvate binding site. Tyr-134 acts as the Proton donor/acceptor in catalysis. The Schiff-base intermediate with substrate role is filled by Lys-162. Ile-205 provides a ligand contact to pyruvate.

The protein belongs to the DapA family. As to quaternary structure, homotetramer; dimer of dimers.

It is found in the cytoplasm. The enzyme catalyses L-aspartate 4-semialdehyde + pyruvate = (2S,4S)-4-hydroxy-2,3,4,5-tetrahydrodipicolinate + H2O + H(+). It participates in amino-acid biosynthesis; L-lysine biosynthesis via DAP pathway; (S)-tetrahydrodipicolinate from L-aspartate: step 3/4. Catalyzes the condensation of (S)-aspartate-beta-semialdehyde [(S)-ASA] and pyruvate to 4-hydroxy-tetrahydrodipicolinate (HTPA). The protein is 4-hydroxy-tetrahydrodipicolinate synthase of Anaeromyxobacter sp. (strain Fw109-5).